The following is a 312-amino-acid chain: Olfactory receptor 1J21 (312 aa).

7 helical membrane-spanning segments follow: residues 29-49, 58-78, 95-115, 143-163, 197-217, 241-261, and 272-292; these read ALFL…ILLI, PMYF…SVTA, AGCV…NFLL, LLVM…TLLF, LVIL…ILVS, CGSH…LYFF, and VIVA…IYSL.

It belongs to the G-protein coupled receptor 1 family.

The protein localises to the cell membrane. Functionally, odorant receptor. Activated by (+) and (-)-carvone. The chain is Olfactory receptor 1J21 from Mus musculus (Mouse).